The sequence spans 225 residues: Uracil phosphoribosyltransferase (225 aa).

36-40 (KGLVR) is a binding site for GTP. 5-phospho-alpha-D-ribose 1-diphosphate contacts are provided by residues arginine 86, arginine 111, and 145 to 153 (DPMLATGST). Uracil-binding positions include isoleucine 210 and 215–217 (GDA). Aspartate 216 is a 5-phospho-alpha-D-ribose 1-diphosphate binding site.

This sequence belongs to the UPRTase family. It depends on Mg(2+) as a cofactor.

The catalysed reaction is UMP + diphosphate = 5-phospho-alpha-D-ribose 1-diphosphate + uracil. Its pathway is pyrimidine metabolism; UMP biosynthesis via salvage pathway; UMP from uracil: step 1/1. With respect to regulation, allosterically activated by GTP. In terms of biological role, catalyzes the conversion of uracil and 5-phospho-alpha-D-ribose 1-diphosphate (PRPP) to UMP and diphosphate. The chain is Uracil phosphoribosyltransferase from Haloarcula marismortui (strain ATCC 43049 / DSM 3752 / JCM 8966 / VKM B-1809) (Halobacterium marismortui).